The following is a 546-amino-acid chain: Chaperonin GroEL 2 (546 aa).

ATP contacts are provided by residues 30–33, lysine 51, 87–91, glycine 415, and aspartate 495; these read TLGP and DGTTT.

This sequence belongs to the chaperonin (HSP60) family. As to quaternary structure, forms a cylinder of 14 subunits composed of two heptameric rings stacked back-to-back. Interacts with the co-chaperonin GroES.

It localises to the cytoplasm. It catalyses the reaction ATP + H2O + a folded polypeptide = ADP + phosphate + an unfolded polypeptide.. Its function is as follows. Together with its co-chaperonin GroES, plays an essential role in assisting protein folding. The GroEL-GroES system forms a nano-cage that allows encapsulation of the non-native substrate proteins and provides a physical environment optimized to promote and accelerate protein folding. This chain is Chaperonin GroEL 2, found in Burkholderia cenocepacia (strain HI2424).